Here is a 352-residue protein sequence, read N- to C-terminus: tRNA (guanine-N(1)-)-methyltransferase (352 aa).

S-adenosyl-L-methionine is bound by residues glycine 109 and 129 to 134 (IGDYVL).

This sequence belongs to the RNA methyltransferase TrmD family. In terms of assembly, homodimer.

The protein localises to the cytoplasm. It catalyses the reaction guanosine(37) in tRNA + S-adenosyl-L-methionine = N(1)-methylguanosine(37) in tRNA + S-adenosyl-L-homocysteine + H(+). Functionally, specifically methylates guanosine-37 in various tRNAs. The chain is tRNA (guanine-N(1)-)-methyltransferase from Chlamydia trachomatis serovar A (strain ATCC VR-571B / DSM 19440 / HAR-13).